Reading from the N-terminus, the 84-residue chain is NADH-ubiquinone oxidoreductase chain 4L (84 aa).

2 consecutive transmembrane segments (helical) span residues 19 to 39 (ITLLIAIEILLLTVTLKLIHI) and 50 to 70 (IFSLIIIILAGAESAIGLSIL).

Belongs to the complex I subunit 4L family.

It is found in the mitochondrion membrane. The enzyme catalyses a ubiquinone + NADH + 5 H(+)(in) = a ubiquinol + NAD(+) + 4 H(+)(out). In terms of biological role, core subunit of the mitochondrial membrane respiratory chain NADH dehydrogenase (Complex I) that is believed to belong to the minimal assembly required for catalysis. Complex I functions in the transfer of electrons from NADH to the respiratory chain. The immediate electron acceptor for the enzyme is believed to be ubiquinone. This chain is NADH-ubiquinone oxidoreductase chain 4L (NAD4L), found in Candida albicans (strain SC5314 / ATCC MYA-2876) (Yeast).